We begin with the raw amino-acid sequence, 358 residues long: UDP-N-acetylglucosamine--N-acetylmuramyl-(pentapeptide) pyrophosphoryl-undecaprenol N-acetylglucosamine transferase (358 aa).

UDP-N-acetyl-alpha-D-glucosamine is bound by residues 13 to 15 (TGG), Asn125, Arg161, Ser189, Ile244, and Gln288.

This sequence belongs to the glycosyltransferase 28 family. MurG subfamily.

It is found in the cell membrane. The enzyme catalyses di-trans,octa-cis-undecaprenyl diphospho-N-acetyl-alpha-D-muramoyl-L-alanyl-D-glutamyl-meso-2,6-diaminopimeloyl-D-alanyl-D-alanine + UDP-N-acetyl-alpha-D-glucosamine = di-trans,octa-cis-undecaprenyl diphospho-[N-acetyl-alpha-D-glucosaminyl-(1-&gt;4)]-N-acetyl-alpha-D-muramoyl-L-alanyl-D-glutamyl-meso-2,6-diaminopimeloyl-D-alanyl-D-alanine + UDP + H(+). Its pathway is cell wall biogenesis; peptidoglycan biosynthesis. Functionally, cell wall formation. Catalyzes the transfer of a GlcNAc subunit on undecaprenyl-pyrophosphoryl-MurNAc-pentapeptide (lipid intermediate I) to form undecaprenyl-pyrophosphoryl-MurNAc-(pentapeptide)GlcNAc (lipid intermediate II). This Baumannia cicadellinicola subsp. Homalodisca coagulata protein is UDP-N-acetylglucosamine--N-acetylmuramyl-(pentapeptide) pyrophosphoryl-undecaprenol N-acetylglucosamine transferase.